The primary structure comprises 2641 residues: Inverse autotransporter adhesin YeeJ (2641 aa).

Residues M1 to A25 form the signal peptide. The region spanning V50–V98 is the LysM domain. Residues T125–N400 are inverse autotransporter. Residues Q513–V605 are invasin 3 domain. Big-1 domains lie at H617 to I711, I721 to V815, Q822 to I913, A920 to V1017, V1024 to A1116, Q1123 to V1220, V1227 to A1319, Q1326 to V1423, L1430 to I1523, I1531 to V1633, H1641 to V1734, E1741 to I1837, Q1844 to I1941, K1948 to V2032, I2048 to Q2141, K2142 to V2235, and V2244 to V2336. Residues K2538–L2641 are C-type lectin domain.

It belongs to the intimin/invasin family.

The protein localises to the cell outer membrane. In terms of biological role, a probable inverse autotransporter, it may be involved in biofilm formation and cell adhesion. May bind peptidoglycan via its LysM domain. This chain is Inverse autotransporter adhesin YeeJ (yeeJ), found in Escherichia coli O157:H7.